The following is a 443-amino-acid chain: UDP-N-acetylmuramate--L-alanine ligase (443 aa).

ATP is bound at residue 110–116; sequence GAHGKTS.

It belongs to the MurCDEF family.

It is found in the cytoplasm. It catalyses the reaction UDP-N-acetyl-alpha-D-muramate + L-alanine + ATP = UDP-N-acetyl-alpha-D-muramoyl-L-alanine + ADP + phosphate + H(+). The protein operates within cell wall biogenesis; peptidoglycan biosynthesis. Its function is as follows. Cell wall formation. This chain is UDP-N-acetylmuramate--L-alanine ligase, found in Streptococcus equi subsp. equi (strain 4047).